The sequence spans 603 residues: UvrABC system protein C (603 aa).

In terms of domain architecture, GIY-YIG spans 17–94 (TTSGCYKMLN…IKTHKPDYNV (78 aa)). The region spanning 199–234 (SEILSQIDIKLKLAVQKEDFETAIKLKEMKSSLIEI) is the UVR domain.

Belongs to the UvrC family. Interacts with UvrB in an incision complex.

It is found in the cytoplasm. The UvrABC repair system catalyzes the recognition and processing of DNA lesions. UvrC both incises the 5' and 3' sides of the lesion. The N-terminal half is responsible for the 3' incision and the C-terminal half is responsible for the 5' incision. The sequence is that of UvrABC system protein C from Borrelia garinii subsp. bavariensis (strain ATCC BAA-2496 / DSM 23469 / PBi) (Borreliella bavariensis).